The chain runs to 271 residues: tRNA pseudouridine synthase A (271 aa).

The Nucleophile role is filled by aspartate 54. Tyrosine 112 contacts substrate.

The protein belongs to the tRNA pseudouridine synthase TruA family. Homodimer.

It carries out the reaction uridine(38/39/40) in tRNA = pseudouridine(38/39/40) in tRNA. Functionally, formation of pseudouridine at positions 38, 39 and 40 in the anticodon stem and loop of transfer RNAs. In Acinetobacter baylyi (strain ATCC 33305 / BD413 / ADP1), this protein is tRNA pseudouridine synthase A.